The primary structure comprises 290 residues: Uridine diphosphate glucose pyrophosphatase NUDT22 (290 aa).

Phe56, Tyr87, Arg139, Ala144, Asp151, His156, and Glu158 together coordinate substrate. In terms of domain architecture, Nudix hydrolase spans 118–285; that stretch reads ADPLGVGAAL…KGAIFLYNRV (168 aa). Residues 175-196 carry the Nudix box motif; it reads GELVVHELFSSVLQEICDEVNV. Residues Glu189 and Glu193 each contribute to the Mg(2+) site. Ser274 is a substrate binding site.

The protein belongs to the Nudix family. It depends on Mg(2+) as a cofactor.

The enzyme catalyses UDP-sugar + H2O = UMP + alpha-D-aldose 1-phosphate.. Functionally, hydrolyzes UDP-glucose to glucose 1-phosphate and UMP and UDP-galactose to galactose 1-phosphate and UMP. Preferred substrate is UDP-glucose. The chain is Uridine diphosphate glucose pyrophosphatase NUDT22 (NUDT22) from Bos taurus (Bovine).